Here is a 514-residue protein sequence, read N- to C-terminus: Alanine--glyoxylate aminotransferase 2, mitochondrial (514 aa).

The N-terminal 41 residues, 1 to 41 (MTLIWRHLLRPLCLVTPAPRILEMRPFLNLGASWTSVTKLS), are a transit peptide targeting the mitochondrion. Lys71 bears the N6-acetyllysine; alternate mark. Lys71 is subject to N6-succinyllysine; alternate. Lys84 is subject to N6-acetyllysine. At Lys262 the chain carries N6-acetyllysine; alternate. At Lys262 the chain carries N6-succinyllysine; alternate. Lys304 carries the N6-succinyllysine modification. Position 350 is an N6-(pyridoxal phosphate)lysine (Lys350). Residue Lys420 is modified to N6-acetyllysine; alternate. Lys420 is subject to N6-succinyllysine; alternate.

This sequence belongs to the class-III pyridoxal-phosphate-dependent aminotransferase family. In terms of assembly, homotetramer. Pyridoxal 5'-phosphate is required as a cofactor.

It localises to the mitochondrion. It carries out the reaction glyoxylate + L-alanine = glycine + pyruvate. The enzyme catalyses (R)-3-amino-2-methylpropanoate + pyruvate = 2-methyl-3-oxopropanoate + L-alanine. It catalyses the reaction 3-oxopropanoate + L-alanine = beta-alanine + pyruvate. The catalysed reaction is 2-oxobutanoate + L-alanine = (2S)-2-aminobutanoate + pyruvate. It carries out the reaction N(omega),N(omega)-dimethyl-L-arginine + pyruvate = 5-(3,3-dimethylguanidino)-2-oxopentanoate + L-alanine. The enzyme catalyses N(omega),N('omega)-dimethyl-L-arginine + pyruvate = 5-(3,3'-dimethylguanidino)-2-oxopentanoate + L-alanine. It catalyses the reaction N(omega),N(omega)-dimethyl-L-arginine + glyoxylate = 5-(3,3-dimethylguanidino)-2-oxopentanoate + glycine. The catalysed reaction is N(omega),N('omega)-dimethyl-L-arginine + glyoxylate = 5-(3,3'-dimethylguanidino)-2-oxopentanoate + glycine. It carries out the reaction N(omega)-methyl-L-arginine + pyruvate = 5-(3-methylguanidino)-2-oxopentanoate + L-alanine. The enzyme catalyses N(omega)-methyl-L-arginine + glyoxylate = 5-(3-methylguanidino)-2-oxopentanoate + glycine. It catalyses the reaction L-ornithine + pyruvate = 5-amino-2-oxopentanoate + L-alanine. The catalysed reaction is L-ornithine + glyoxylate = 5-amino-2-oxopentanoate + glycine. It carries out the reaction (2S)-2-aminobutanoate + glyoxylate = 2-oxobutanoate + glycine. The enzyme catalyses N(omega),N(omega)-dimethyl-L-arginine + oxaloacetate = 5-(3,3-dimethylguanidino)-2-oxopentanoate + L-aspartate. It catalyses the reaction oxaloacetate + L-alanine = L-aspartate + pyruvate. The catalysed reaction is N(omega),N(omega)-dimethyl-L-arginine + 2-oxobutanoate = 5-(3,3-dimethylguanidino)-2-oxopentanoate + (2S)-2-aminobutanoate. It carries out the reaction 2-oxopentanoate + N(omega),N(omega)-dimethyl-L-arginine = 5-(3,3-dimethylguanidino)-2-oxopentanoate + L-2-aminopentanoate. The enzyme catalyses 2-oxohexanoate + N(omega),N(omega)-dimethyl-L-arginine = L-2-aminohexanoate + 5-(3,3-dimethylguanidino)-2-oxopentanoate. Its function is as follows. Multifunctional aminotransferase with a broad substrate specificity. Catalyzes the conversion of glyoxylate to glycine using alanine as the amino donor. Catalyzes metabolism of not L- but the D-isomer of D-beta-aminoisobutyric acid to generate 2-methyl-3-oxopropanoate and alanine. Catalyzes the transfer of the amino group from beta-alanine to pyruvate to yield L-alanine and 3-oxopropanoate. Can metabolize NG-monomethyl-L-arginine (NMMA), asymmetric NG,NG-dimethyl-L-arginine (ADMA) and symmetric NG,N'G-dimethyl-L-arginine (SDMA). ADMA is a potent inhibitor of nitric-oxide (NO) synthase, and this activity provides mechanism through which the kidney regulates blood pressure. This chain is Alanine--glyoxylate aminotransferase 2, mitochondrial (AGXT2), found in Pongo abelii (Sumatran orangutan).